The primary structure comprises 938 residues: MSVRLRFLSQGDAGAVGTVGRSASFAGFSSAQSRRLSKSINRNSVRSRLPAKSSKAYRTLRKGSLCLDPRPQQVKKIFDALKRGLREHLCEQQAELDYLCGRHTDTQRGSRLAFYYDLDKQLRLVERHIRKVEFHISKVDELYEAYCIQWRLRDGASNMQRAFSNSTQSRASRESLQELGRSLQECLEDMCLIEGTLEGHLGEFQVKMKGLVGYARLCPGDQYEVLMRLGRQRWRLKGRIEPDDSQTWDEEERVFVPTVHENLEIKVTELRGLSSMVVGAVTCDVADFFMARPQLVVVDITELGTIKLQLELLWNPLDSECRLVSPSPTGRFSMGSRKGSLYTWTPPSTPSFRDKYYLSLLQQPVQQSLLLGGPKATSILGYLSDSELQGPRLRSRSQELLEMDSFSSEDPRDTETSTSASTSDVGFLPVPVGSAACTEEETREGPPPLGLLPGLAHPARGVLVERPGWRDLGGERLALLQDAPIHSPMVPRSRKGQEDGDVGDGVEGPVQEVLDLLRSADPAQPQLRELEYQVLGLRERLKPRGVQPEPVSAQSLMDCILESFAFLNADLASDELSLFGGSQAPERDSPPPPRPSLKVSPSELTAGAPELDTLLTVHLQVCKALLQKLASPNLSRMVEDCLLEEAVQQRQVLEVLSDLDLEQVSKARSVEEIIPQASHRKGGLALWQGCTQPGGVLACPASTLLSQLKKTFLHRVRGKYPGQLEIVCRRLLEQVVGCGGLLVPAGLQEEQVVTWFQFHSYLQRQSISDLEKHLAQLTKEVTLIEELSCAGPAKALRKLHGKCLSQLQPLPQTLQAWALLQLDGPPRLCRAARTRLASAARNKRFREKALLYYTNALNDSDAKVQQAACVALQQLGGIESCEQIVSLCQSDLEAVRVAAREATLSFGEKGRLAFEKMDKLHSEQEAFCQEADVEITIF.

3 positions are modified to phosphoserine: serine 9, serine 24, and serine 340. Threonine 345 is modified (phosphothreonine). Phosphoserine is present on residues serine 351 and serine 384. Disordered stretches follow at residues 402–430 (EMDS…FLPV) and 579–603 (FGGS…SPSE).

It belongs to the RIPOR family.

The chain is RIPOR family member 3 from Mus musculus (Mouse).